Reading from the N-terminus, the 278-residue chain is Shikimate dehydrogenase (NADP(+)) (278 aa).

Shikimate is bound by residues 19 to 21 (SRS) and threonine 66. Catalysis depends on lysine 70, which acts as the Proton acceptor. Aspartate 82 lines the NADP(+) pocket. Asparagine 91 and aspartate 107 together coordinate shikimate. Residues 133–137 (GAGGA), 157–162 (NRTRAK), and isoleucine 222 contribute to the NADP(+) site. Shikimate is bound at residue tyrosine 224. Glycine 245 lines the NADP(+) pocket.

The protein belongs to the shikimate dehydrogenase family. In terms of assembly, homodimer.

The enzyme catalyses shikimate + NADP(+) = 3-dehydroshikimate + NADPH + H(+). Its pathway is metabolic intermediate biosynthesis; chorismate biosynthesis; chorismate from D-erythrose 4-phosphate and phosphoenolpyruvate: step 4/7. Its function is as follows. Involved in the biosynthesis of the chorismate, which leads to the biosynthesis of aromatic amino acids. Catalyzes the reversible NADPH linked reduction of 3-dehydroshikimate (DHSA) to yield shikimate (SA). The protein is Shikimate dehydrogenase (NADP(+)) of Dinoroseobacter shibae (strain DSM 16493 / NCIMB 14021 / DFL 12).